We begin with the raw amino-acid sequence, 480 residues long: Citrate synthase 1, peroxisomal (480 aa).

Residues His321, His360, and Asp416 contribute to the active site.

Belongs to the citrate synthase family. In terms of tissue distribution, expressed only in siliques. Not expressed in flower, stem, cauline leaf, young leaf, mature leaf and senescent leaf.

The protein resides in the peroxisome. The catalysed reaction is oxaloacetate + acetyl-CoA + H2O = citrate + CoA + H(+). It participates in carbohydrate metabolism; tricarboxylic acid cycle; isocitrate from oxaloacetate: step 1/2. This is Citrate synthase 1, peroxisomal (CSY1) from Arabidopsis thaliana (Mouse-ear cress).